The primary structure comprises 383 residues: UDP-N-acetylglucosamine--N-acetylmuramyl-(pentapeptide) pyrophosphoryl-undecaprenol N-acetylglucosamine transferase (383 aa).

UDP-N-acetyl-alpha-D-glucosamine is bound by residues 10–12 (TGG), asparagine 124, arginine 165, serine 190, isoleucine 245, and glutamine 290. The disordered stretch occupies residues 364 to 383 (PFGQAREPGQKPARPPDLAS).

It belongs to the glycosyltransferase 28 family. MurG subfamily.

It localises to the cell inner membrane. The catalysed reaction is di-trans,octa-cis-undecaprenyl diphospho-N-acetyl-alpha-D-muramoyl-L-alanyl-D-glutamyl-meso-2,6-diaminopimeloyl-D-alanyl-D-alanine + UDP-N-acetyl-alpha-D-glucosamine = di-trans,octa-cis-undecaprenyl diphospho-[N-acetyl-alpha-D-glucosaminyl-(1-&gt;4)]-N-acetyl-alpha-D-muramoyl-L-alanyl-D-glutamyl-meso-2,6-diaminopimeloyl-D-alanyl-D-alanine + UDP + H(+). Its pathway is cell wall biogenesis; peptidoglycan biosynthesis. In terms of biological role, cell wall formation. Catalyzes the transfer of a GlcNAc subunit on undecaprenyl-pyrophosphoryl-MurNAc-pentapeptide (lipid intermediate I) to form undecaprenyl-pyrophosphoryl-MurNAc-(pentapeptide)GlcNAc (lipid intermediate II). The protein is UDP-N-acetylglucosamine--N-acetylmuramyl-(pentapeptide) pyrophosphoryl-undecaprenol N-acetylglucosamine transferase of Anaeromyxobacter sp. (strain K).